A 50-amino-acid polypeptide reads, in one-letter code: uncharacterized protein (50 aa).

This is an uncharacterized protein from Rickettsia prowazekii (strain Madrid E).